The chain runs to 521 residues: DEAD-box ATP-dependent RNA helicase 1 (521 aa).

Residues 1-20 (MVVAMATKEEEGGPSSRVPH) are disordered. Positions 36 to 65 (CPVAHLPRLDPRLVKPLQRMGIESFFPVQV) match the Q motif motif. The Helicase ATP-binding domain occupies 72–302 (IGPGAFERDI…QLELQHPLLL (231 aa)). 85–92 (SPTGSGKT) serves as a coordination point for ATP. Residues 213–216 (DETD) carry the DEAD box motif. The 151-residue stretch at 330–480 (SLIVLLQELR…SLPEESVETL (151 aa)) folds into the Helicase C-terminal domain. Residues 495 to 507 (LESEATKKSKSGD) are compositionally biased toward basic and acidic residues. The disordered stretch occupies residues 495–521 (LESEATKKSKSGDKAPNASKRKRTINT).

The protein belongs to the DEAD box helicase family. DDX51/DBP6 subfamily.

The catalysed reaction is ATP + H2O = ADP + phosphate + H(+). In Oryza sativa subsp. japonica (Rice), this protein is DEAD-box ATP-dependent RNA helicase 1.